Consider the following 158-residue polypeptide: S-ribosylhomocysteine lyase (158 aa).

Residues His54, His58, and Cys124 each contribute to the Fe cation site.

It belongs to the LuxS family. As to quaternary structure, homodimer. The cofactor is Fe cation.

It catalyses the reaction S-(5-deoxy-D-ribos-5-yl)-L-homocysteine = (S)-4,5-dihydroxypentane-2,3-dione + L-homocysteine. Its function is as follows. Involved in the synthesis of autoinducer 2 (AI-2) which is secreted by bacteria and is used to communicate both the cell density and the metabolic potential of the environment. The regulation of gene expression in response to changes in cell density is called quorum sensing. Catalyzes the transformation of S-ribosylhomocysteine (RHC) to homocysteine (HC) and 4,5-dihydroxy-2,3-pentadione (DPD). This chain is S-ribosylhomocysteine lyase, found in Lactiplantibacillus plantarum (strain ATCC BAA-793 / NCIMB 8826 / WCFS1) (Lactobacillus plantarum).